The following is a 441-amino-acid chain: Xylose isomerase 1 (441 aa).

Residues His105 and Asp108 contribute to the active site. Mg(2+) contacts are provided by Glu236, Glu272, His275, Asp300, Asp311, Asp313, and Asp343.

Belongs to the xylose isomerase family. In terms of assembly, homotetramer. It depends on Mg(2+) as a cofactor.

Its subcellular location is the cytoplasm. It carries out the reaction alpha-D-xylose = alpha-D-xylulofuranose. The protein is Xylose isomerase 1 (xylA1) of Xanthomonas axonopodis pv. citri (strain 306).